A 118-amino-acid polypeptide reads, in one-letter code: Large ribosomal subunit protein bL19 (118 aa).

The protein belongs to the bacterial ribosomal protein bL19 family.

In terms of biological role, this protein is located at the 30S-50S ribosomal subunit interface and may play a role in the structure and function of the aminoacyl-tRNA binding site. The sequence is that of Large ribosomal subunit protein bL19 from Geotalea uraniireducens (strain Rf4) (Geobacter uraniireducens).